The following is a 420-amino-acid chain: Argininosuccinate synthase (420 aa).

23 to 31 lines the ATP pocket; sequence AYSGGLDTS. Y102 contacts L-citrulline. Position 132 (G132) interacts with ATP. Residues T134, N138, and D139 each contribute to the L-aspartate site. N138 contacts L-citrulline. L-citrulline contacts are provided by R142, S190, E274, and Y286.

The protein belongs to the argininosuccinate synthase family. Type 1 subfamily. Homotetramer.

Its subcellular location is the cytoplasm. It catalyses the reaction L-citrulline + L-aspartate + ATP = 2-(N(omega)-L-arginino)succinate + AMP + diphosphate + H(+). It functions in the pathway amino-acid biosynthesis; L-arginine biosynthesis; L-arginine from L-ornithine and carbamoyl phosphate: step 2/3. The chain is Argininosuccinate synthase from Renibacterium salmoninarum (strain ATCC 33209 / DSM 20767 / JCM 11484 / NBRC 15589 / NCIMB 2235).